A 34-amino-acid chain; its full sequence is U1-poneritoxin-Na2a (34 aa).

As to expression, expressed by the venom gland.

It localises to the secreted. Its function is as follows. May have antimicrobial properties, like most ant linear peptides. The protein is U1-poneritoxin-Na2a of Neoponera apicalis (Ant).